The following is a 776-amino-acid chain: Protein translocase subunit SecA 2 (776 aa).

ATP is bound by residues Gln80, 98 to 102, and Asp486; that span reads GEGKT.

This sequence belongs to the SecA family. As to quaternary structure, monomer and homodimer. Part of the essential Sec protein translocation apparatus which comprises SecA, SecYEG and auxiliary proteins SecDF. Other proteins may also be involved.

It localises to the cell membrane. The protein resides in the cytoplasm. It catalyses the reaction ATP + H2O + cellular proteinSide 1 = ADP + phosphate + cellular proteinSide 2.. In terms of biological role, part of the Sec protein translocase complex. Interacts with the SecYEG preprotein conducting channel. Has a central role in coupling the hydrolysis of ATP to the transfer of proteins into and across the cell membrane, serving as an ATP-driven molecular motor driving the stepwise translocation of polypeptide chains across the membrane. This chain is Protein translocase subunit SecA 2, found in Listeria monocytogenes serotype 1/2a (strain 10403S).